The sequence spans 34 residues: Protein MgtT (34 aa).

Residues 1–34 (MNGDNPSPNRPLVTVVYKGPDFYDGEKKPPVNRR) are disordered. Basic and acidic residues predominate over residues 24–34 (DGEKKPPVNRR).

This Escherichia coli (strain K12) protein is Protein MgtT.